A 216-amino-acid chain; its full sequence is Fibroblast growth factor 17 (216 aa).

Positions 1–22 (MGAARLLPNLTLCLQLLILCCQ) are cleaved as a signal peptide. The N-linked (GlcNAc...) asparagine glycan is linked to asparagine 137. Positions 190 to 216 (EKQKQFEFVGSAPTRRTKRTRRPQPLT) are disordered. A compositionally biased stretch (basic residues) spans 204–216 (RRTKRTRRPQPLT).

This sequence belongs to the heparin-binding growth factors family. As to quaternary structure, interacts with FGFR3 and FGFR4. Preferentially expressed in the embryonic brain.

It is found in the secreted. In terms of biological role, plays an important role in the regulation of embryonic development and as signaling molecule in the induction and patterning of the embryonic brain. Required for normal brain development. This chain is Fibroblast growth factor 17 (FGF17), found in Homo sapiens (Human).